We begin with the raw amino-acid sequence, 130 residues long: Small ribosomal subunit protein uS11 (130 aa).

This sequence belongs to the universal ribosomal protein uS11 family. Part of the 30S ribosomal subunit. Interacts with proteins S7 and S18. Binds to IF-3.

Its function is as follows. Located on the platform of the 30S subunit, it bridges several disparate RNA helices of the 16S rRNA. Forms part of the Shine-Dalgarno cleft in the 70S ribosome. This is Small ribosomal subunit protein uS11 from Thiobacillus denitrificans (strain ATCC 25259 / T1).